Here is a 319-residue protein sequence, read N- to C-terminus: Putative ribose-phosphate pyrophosphokinase 2 (319 aa).

ATP is bound by residues 40–42 (DGE) and 99–100 (RQ). Mg(2+) is bound at residue H133. D-ribose 5-phosphate-binding positions include D222 and 226–230 (NTGRT).

This sequence belongs to the ribose-phosphate pyrophosphokinase family. Class I subfamily. In terms of assembly, homohexamer. Mg(2+) serves as cofactor.

It is found in the cytoplasm. It catalyses the reaction D-ribose 5-phosphate + ATP = 5-phospho-alpha-D-ribose 1-diphosphate + AMP + H(+). The protein operates within metabolic intermediate biosynthesis; 5-phospho-alpha-D-ribose 1-diphosphate biosynthesis; 5-phospho-alpha-D-ribose 1-diphosphate from D-ribose 5-phosphate (route I): step 1/1. Its function is as follows. Involved in the biosynthesis of the central metabolite phospho-alpha-D-ribosyl-1-pyrophosphate (PRPP) via the transfer of pyrophosphoryl group from ATP to 1-hydroxyl of ribose-5-phosphate (Rib-5-P). The protein is Putative ribose-phosphate pyrophosphokinase 2 of Streptococcus pneumoniae serotype 4 (strain ATCC BAA-334 / TIGR4).